The sequence spans 460 residues: Carboxypeptidase DacB (460 aa).

The first 28 residues, 1–28 (MRPTRWRRSTHVAVGVAVLALVVAVVAA), serve as a signal peptide directing secretion. Positions 39–64 (AAEAVPPAPPPATADPGVVPVDLSAP) are disordered. Catalysis depends on serine 113, which acts as the Acyl-ester intermediate. Catalysis depends on lysine 116, which acts as the Proton acceptor. Serine 294 is a catalytic residue.

It belongs to the peptidase S13 family.

Functionally, carboxypeptidase that cleaves terminal D-alanine from peptidoglycan in the mycobacterial cell wall. May cleave L-Lys-D-Ala and/or D-Ala-D-Ala peptide bonds. Exerts important effects on mycobacterial cell morphology and cell division. This is Carboxypeptidase DacB from Mycolicibacterium smegmatis (strain ATCC 700084 / mc(2)155) (Mycobacterium smegmatis).